The following is a 153-amino-acid chain: Large ribosomal subunit protein uL30 (153 aa).

This sequence belongs to the universal ribosomal protein uL30 family. Part of the 50S ribosomal subunit.

This chain is Large ribosomal subunit protein uL30, found in Methanocorpusculum labreanum (strain ATCC 43576 / DSM 4855 / Z).